A 286-amino-acid chain; its full sequence is 33 kDa chaperonin (286 aa).

Intrachain disulfides connect cysteine 225–cysteine 227 and cysteine 258–cysteine 261.

This sequence belongs to the HSP33 family. Under oxidizing conditions two disulfide bonds are formed involving the reactive cysteines. Under reducing conditions zinc is bound to the reactive cysteines and the protein is inactive.

Its subcellular location is the cytoplasm. In terms of biological role, redox regulated molecular chaperone. Protects both thermally unfolding and oxidatively damaged proteins from irreversible aggregation. Plays an important role in the bacterial defense system toward oxidative stress. This is 33 kDa chaperonin from Shewanella sp. (strain ANA-3).